The primary structure comprises 242 residues: DNA repair protein RecO (242 aa).

Belongs to the RecO family.

Its function is as follows. Involved in DNA repair and RecF pathway recombination. This chain is DNA repair protein RecO, found in Bacteroides fragilis (strain ATCC 25285 / DSM 2151 / CCUG 4856 / JCM 11019 / LMG 10263 / NCTC 9343 / Onslow / VPI 2553 / EN-2).